A 113-amino-acid polypeptide reads, in one-letter code: Hydrogenase maturation factor HypA (113 aa).

Ni(2+) is bound at residue H2. Residues C73, C76, C89, and C92 each contribute to the Zn(2+) site.

It belongs to the HypA/HybF family.

In terms of biological role, involved in the maturation of [NiFe] hydrogenases. Required for nickel insertion into the metal center of the hydrogenase. The chain is Hydrogenase maturation factor HypA from Methylocella silvestris (strain DSM 15510 / CIP 108128 / LMG 27833 / NCIMB 13906 / BL2).